A 502-amino-acid chain; its full sequence is Peroxisomal catalase (502 aa).

Catalysis depends on residues His-64 and Asn-137. Tyr-347 provides a ligand contact to heme. A Microbody targeting signal motif is present at residues 500 to 502 (AKM).

This sequence belongs to the catalase family. Heme is required as a cofactor.

The protein localises to the peroxisome matrix. The enzyme catalyses 2 H2O2 = O2 + 2 H2O. Catalyzes the degradation of hydrogen peroxide (H(2)O(2)) generated by peroxisomal oxidases to water and oxygen, thereby protecting cells from the toxic effects of hydrogen peroxide. The polypeptide is Peroxisomal catalase (Toxoplasma gondii).